The chain runs to 271 residues: Plasmanylethanolamine desaturase 1 (271 aa).

3 consecutive transmembrane segments (helical) span residues 48–68, 75–95, and 162–182; these read WCCVVLCFSLIAHNMAHLLLL, PLVMLGMVAGALLADFLSGLV, and VLEQLYPWECFVFCLIIFGTF. Positions 187-191 match the Histidine box-1 motif; sequence HKWSH. A Histidine box-2 motif is present at residues 214–218; that stretch reads HHRIH.

The protein belongs to the fatty acid desaturase CarF family.

It is found in the endoplasmic reticulum membrane. The enzyme catalyses a 1-(1,2-saturated alkyl)-2-acyl-sn-glycero-3-phosphoethanolamine + 2 Fe(II)-[cytochrome b5] + O2 + 2 H(+) = a 1-O-(1Z-alkenyl)-2-acyl-sn-glycero-3-phosphoethanolamine + 2 Fe(III)-[cytochrome b5] + 2 H2O. It carries out the reaction a 1-O-hexadecyl-2-acyl-sn-glycero-3-phosphoethanolamine + 2 Fe(II)-[cytochrome b5] + O2 + 2 H(+) = a 1-O-(1Z-hexadecenyl)-2-acyl-sn-glycero-3-phosphoethanolamine + 2 Fe(III)-[cytochrome b5] + 2 H2O. The catalysed reaction is a 1-O-octadecyl-2-acyl-sn-glycero-3-phosphoethanolamine + 2 Fe(II)-[cytochrome b5] + O2 + 2 H(+) = a 1-O-(1Z-octadecenyl)-2-acyl-sn-glycero-3-phosphoethanolamine + 2 Fe(III)-[cytochrome b5] + 2 H2O. It catalyses the reaction a 1-O-(9Z-octadecenyl)-2-acyl-sn-glycero-3-phosphoethanolamine + 2 Fe(II)-[cytochrome b5] + O2 + 2 H(+) = a 1-O-(1Z,9Z-octadecadienyl)-2-acyl-sn-glycero-3-phosphoethanolamine + 2 Fe(III)-[cytochrome b5] + 2 H2O. It participates in lipid metabolism; fatty acid metabolism. In terms of biological role, plasmanylethanolamine desaturase involved in plasmalogen biogenesis in the endoplasmic reticulum membrane. Plasmalogens are glycerophospholipids with a hydrocarbon chain linked by a vinyl ether bond at the glycerol sn-1 position, and are involved in antioxidative and signaling mechanisms. This Bos taurus (Bovine) protein is Plasmanylethanolamine desaturase 1.